The chain runs to 67 residues: Protein DsrB (67 aa).

Belongs to the DsrB family.

This Pectobacterium carotovorum subsp. carotovorum (strain PC1) protein is Protein DsrB.